Reading from the N-terminus, the 2359-residue chain is Low-reducing polyketide synthase drtA (2359 aa).

One can recognise a Ketosynthase family 3 (KS3) domain in the interval 17–444 (LPPIAVVSFA…GANAHVIVEE (428 aa)). Residues C190, H327, and H367 each act as for beta-ketoacyl synthase activity in the active site. A malonyl-CoA:ACP transacylase (MAT) domain region spans residues 556–868 (VFTGQGSQWP…QYLAALDRGK (313 aa)). S648 functions as the For malonyltransferase activity in the catalytic mechanism. An N-terminal hotdog fold region spans residues 940–1077 (HELLGRKILG…GRISVRQVAA (138 aa)). The dehydratase (DH) domain stretch occupies residues 940-1245 (HELLGRKILG…FKGLRFSELN (306 aa)). The 311-residue stretch at 940–1250 (HELLGRKILG…FSELNMGDGV (311 aa)) folds into the PKS/mFAS DH domain. H972 serves as the catalytic Proton acceptor; for dehydratase activity. Residues 1089–1250 (AYSESAEHWY…FSELNMGDGV (162 aa)) are C-terminal hotdog fold. D1153 functions as the Proton donor; for dehydratase activity in the catalytic mechanism. Residues 1659–1970 (GSFDSLELYE…TGRHVGKVVV (312 aa)) are enoyl reductase (ER) domain. The segment at 1995 to 2172 (SYLITGGLHG…LSLDIGAVQD (178 aa)) is ketoreductase (KR) domain. The Carrier domain maps to 2280-2356 (ALTEAAIELF…ALCSKLITRL (77 aa)). S2316 is modified (O-(pantetheine 4'-phosphoryl)serine).

It functions in the pathway secondary metabolite biosynthesis; terpenoid biosynthesis. Functionally, low-reducing polyketide synthase; part of the gene cluster that mediates the biosynthesis of various drimane-type sesquiterpene esters, compounds that exhibit diverse biological activities and are widely present in eukaryotes. The pathway begins with the synthesis of the backbone drimenol by the terpene cyclase drtB using farnesyl pyrophosphate (FPP) as substrate. The cytochrome P450 monooxygenase drtD is then responsible for the hydroxylations at C-6, C-9 and C-12, as well as the oxidation of hydroxyl groups at C-6 and C-11 to a ketone and an aldehyde, respectively. Then, the biosynthesis can go in two directions, either the hydroxylated drimenol is further hydroxylated at C-2 and C-3 by an enzyme(s) not associated with the drt cluster, or the FAD-binding oxidoreductase drtC further oxidizes C-11 or C-12 to form the butyrolactone ring. DrtB, drtD and drtC are solely responsible for the formation of the different drimane structures observed during drimane sesquiterpenes biosynthesis. The polyketide synthase drtA synthesizes different lengths (C6 and C8) of PKS chains, which are then oxidized to varying degrees by the short-chain dehydrogenase drtF. Finally, these PKS chains are transferred onto drimane sesquiterpenes by the acyltransferase drtE, forming the sesquiterpene esters. In addition to the different fatty acyl-CoA chains produced by drtA, drtE is also able to use cinnamoyl-CoA as a substrate. This Aspergillus calidoustus protein is Low-reducing polyketide synthase drtA.